The primary structure comprises 309 residues: Zinc-finger homeodomain protein 5 (309 aa).

A compositionally biased stretch (basic and acidic residues) spans 1–16; the sequence is MDMRSHEMIERRREDN. Residues 1-21 are disordered; that stretch reads MDMRSHEMIERRREDNGNNNG. The segment at 76–125 adopts a ZF-HD dimerization-type; degenerate zinc-finger fold; sequence YRECLKNHAASVGGSVHDGCGEFMPSGEEGTIEALRCAACDCHRNFHRKE. Positions 240–303 form a DNA-binding region, homeobox; the sequence is KKRFRTKFTT…NNKNNAKKPP (64 aa).

Homo- and heterodimer with other ZFHD proteins. Interacts with MIF1, MIF2 and MIF3; these interactions prevent nuclear localization and DNA-binding to inhibit transcription regulation activity. Binds to ZHD1, ZHD2, ZHD4, ZHD10 and ZHD11. Mostly expressed in flowers and inflorescence.

It is found in the nucleus. Functionally, putative transcription factor. Binds DNA at 5'-ATTA-3' consensus promoter regions. Regulates floral architecture and leaf development. Regulators in the abscisic acid (ABA) signal pathway that confers sensitivity to ABA in an ARF2-dependent manner. The polypeptide is Zinc-finger homeodomain protein 5 (ZHD5) (Arabidopsis thaliana (Mouse-ear cress)).